The primary structure comprises 834 residues: Periplasmic nitrate reductase (834 aa).

The tat-type signal signal peptide spans 1-29 (MNLTRREFAKANAAAIAAAAAGLPILVRA). A 4Fe-4S Mo/W bis-MGD-type domain is found at 41 to 97 (LDWNKAPCRFCGTGCSVMVATRDGQVVATHGDIKAEVNRGINCVKGYFLSKIMYGSD). Residues Cys-48, Cys-51, Cys-55, and Cys-83 each contribute to the [4Fe-4S] cluster site. Mo-bis(molybdopterin guanine dinucleotide) contacts are provided by residues Lys-85, Gln-152, Asn-177, Cys-181, 214–221 (WGSNMAEM), 245–249 (STFEH), 264–266 (QTD), Met-375, Gln-379, Asn-485, 511–512 (SD), Lys-534, Asp-561, and 721–730 (TGRVLEHWHT). Phe-797 serves as a coordination point for substrate. Asn-805 and Lys-822 together coordinate Mo-bis(molybdopterin guanine dinucleotide).

The protein belongs to the prokaryotic molybdopterin-containing oxidoreductase family. NasA/NapA/NarB subfamily. Component of the periplasmic nitrate reductase NapAB complex composed of NapA and NapB. [4Fe-4S] cluster serves as cofactor. It depends on Mo-bis(molybdopterin guanine dinucleotide) as a cofactor. Predicted to be exported by the Tat system. The position of the signal peptide cleavage has not been experimentally proven.

Its subcellular location is the periplasm. It catalyses the reaction 2 Fe(II)-[cytochrome] + nitrate + 2 H(+) = 2 Fe(III)-[cytochrome] + nitrite + H2O. In terms of biological role, catalytic subunit of the periplasmic nitrate reductase complex NapAB. Receives electrons from NapB and catalyzes the reduction of nitrate to nitrite. The protein is Periplasmic nitrate reductase of Pseudomonas paraeruginosa (strain DSM 24068 / PA7) (Pseudomonas aeruginosa (strain PA7)).